The chain runs to 168 residues: Acetolactate synthase small subunit (168 aa).

Positions 7–82 constitute an ACT domain; it reads TLSVLVEDKP…VIKIVEQDDE (76 aa).

This sequence belongs to the acetolactate synthase small subunit family. As to quaternary structure, dimer of large and small chains.

The enzyme catalyses 2 pyruvate + H(+) = (2S)-2-acetolactate + CO2. Its pathway is amino-acid biosynthesis; L-isoleucine biosynthesis; L-isoleucine from 2-oxobutanoate: step 1/4. It participates in amino-acid biosynthesis; L-valine biosynthesis; L-valine from pyruvate: step 1/4. This chain is Acetolactate synthase small subunit (ilvH), found in Mycobacterium bovis (strain ATCC BAA-935 / AF2122/97).